The primary structure comprises 532 residues: Phosphoenolpyruvate carboxykinase (ATP) (532 aa).

3 residues coordinate substrate: R60, Y200, and K206. ATP-binding positions include K206, H225, and 242–250; that span reads GLSGTGKTT. 2 residues coordinate Mn(2+): K206 and H225. Residue S244 participates in substrate binding. Position 263 (D263) interacts with Mn(2+). ATP-binding positions include E291, R327, 443–444, and T449; that span reads RI. R327 provides a ligand contact to substrate.

Belongs to the phosphoenolpyruvate carboxykinase (ATP) family. As to quaternary structure, monomer. Requires Mn(2+) as cofactor.

The protein localises to the cytoplasm. The catalysed reaction is oxaloacetate + ATP = phosphoenolpyruvate + ADP + CO2. It functions in the pathway carbohydrate biosynthesis; gluconeogenesis. Inhibited by p-chloromercuribenzoate. Its function is as follows. Involved in gluconeogenesis. Catalyzes the conversion of oxaloacetate (OAA) to phosphoenolpyruvate (PEP) through direct phosphoryl transfer between the nucleoside triphosphate and OAA. The protein is Phosphoenolpyruvate carboxykinase (ATP) of Anaerobiospirillum succiniciproducens.